The following is a 244-amino-acid chain: U11/U12 small nuclear ribonucleoprotein 35 kDa protein (244 aa).

The RRM domain maps to 51 to 129; sequence LTLFVARLNS…HEIFVDYELE (79 aa). The span at 146 to 162 shows a compositional bias: basic and acidic residues; sequence GKKESGQLRFGGRDRPF. A disordered region spans residues 146 to 244; sequence GKKESGQLRF…KTRDKRDRSK (99 aa). Residue lysine 172 forms a Glycyl lysine isopeptide (Lys-Gly) (interchain with G-Cter in SUMO2) linkage. Composition is skewed to basic and acidic residues over residues 173–185 and 192–244; these read NEPHREGKRERRE and RHWD…DRSK.

In terms of assembly, component of the U11/U12 snRNPs that are part of the U12-type spliceosome.

Its subcellular location is the nucleus. In Rattus norvegicus (Rat), this protein is U11/U12 small nuclear ribonucleoprotein 35 kDa protein (Snrnp35).